We begin with the raw amino-acid sequence, 254 residues long: Diphthine synthase (254 aa).

Residues Asp-83, Leu-86, 111–112 (SI), Leu-163, and Val-205 each bind S-adenosyl-L-methionine.

This sequence belongs to the diphthine synthase family. As to quaternary structure, homodimer.

The enzyme catalyses 2-[(3S)-amino-3-carboxypropyl]-L-histidyl-[translation elongation factor 2] + 3 S-adenosyl-L-methionine = diphthine-[translation elongation factor 2] + 3 S-adenosyl-L-homocysteine + 3 H(+). It participates in protein modification; peptidyl-diphthamide biosynthesis. Its function is as follows. S-adenosyl-L-methionine-dependent methyltransferase that catalyzes the trimethylation of the amino group of the modified target histidine residue in translation elongation factor 2 (EF-2), to form an intermediate called diphthine. The three successive methylation reactions represent the second step of diphthamide biosynthesis. The sequence is that of Diphthine synthase from Pyrobaculum aerophilum (strain ATCC 51768 / DSM 7523 / JCM 9630 / CIP 104966 / NBRC 100827 / IM2).